The primary structure comprises 569 residues: MGSTLGCHRSIPRDPSDLSHSRKFSAACNFSNILVNQERLNINTATEEELMTLPGVTRAVARSIVEYREYIGGFKKVEDLALVSGVGATKLEQVKFEICVSSKGSSAQHSPSSLRRDLLAEQQPHHLATAVPLTPRVNINTATPAQLMSVRGLSEKMALSIVDFRREHGPFRSVEDLVRMDGINAAFLDRIRHQVFAERSRPPSTHTNGGLTFTAKPHPSPTSLSLQSEDLDLPPGGPTQIISTRPSVEAFGGTRDGRPVLRLATWNLQGCSVEKANNPGVREVVCMTLLENSIKLLAVQELLDREALEKFCTELNQPTLPNIRKWKGPRGCWKAVVAEKPSSQLQKGAGYAGFLWDAAAGMELRDAGSQESSPSNGHGKLAGPSPYLGRFKVGSHDLTLVNLHLAALTLLGSENPSKNHSDGHRLASFAQTLQETLKGEKDVIILGDFGQGPDSNDYDILRKEKFHHLIPAHTFTNISTKNPQGSKSLDNIWISKSLKKVFTGHWAVVREGLTNPWIPDNWSWGGVASEHCPVLAEFYTEKDWSKKDAPRNGSGVALERSEANIKHER.

Positions 1-20 are disordered; that stretch reads MGSTLGCHRSIPRDPSDLSH. Glycine 2 carries N-myristoyl glycine lipidation. Residues 11–20 are compositionally biased toward basic and acidic residues; the sequence is IPRDPSDLSH. Serine 16, serine 21, and serine 25 each carry phosphoserine. The HhH domain maps to 38 to 67; it reads ERLNINTATEEELMTLPGVTRAVARSIVEY. 4 positions are modified to phosphoserine: serine 106, serine 110, serine 160, and serine 173. Residues 200–225 are disordered; it reads SRPPSTHTNGGLTFTAKPHPSPTSLS. Positions 202–211 are enriched in polar residues; the sequence is PPSTHTNGGL. Threonine 265 is modified (phosphothreonine). A Phosphoserine modification is found at serine 428. The segment at 545–569 is disordered; it reads SKKDAPRNGSGVALERSEANIKHER. Basic and acidic residues predominate over residues 559 to 569; the sequence is ERSEANIKHER.

The chain is Endonuclease/exonuclease/phosphatase family domain-containing protein 1 (EEPD1) from Homo sapiens (Human).